The following is a 656-amino-acid chain: Choline transporter-like protein 1 (656 aa).

A lipid anchor (N-myristoyl glycine) is attached at Gly2. Topologically, residues Gly2 to Pro29 are cytoplasmic. Residues Trp30–Ala50 form a helical membrane-spanning segment. Topologically, residues Thr51 to Lys211 are extracellular. N-linked (GlcNAc...) asparagine glycosylation is found at Asn134 and Asn179. A helical transmembrane segment spans residues Glu212–Ile232. Over Arg233–Arg237 the chain is Cytoplasmic. The helical transmembrane segment at Val238 to Leu258 threads the bilayer. The Extracellular portion of the chain corresponds to Trp259–Ala287. A helical membrane pass occupies residues Leu288–Val308. The Cytoplasmic portion of the chain corresponds to Met309–Ala314. A helical membrane pass occupies residues Leu315–Phe335. The Extracellular portion of the chain corresponds to Gln336–Pro337. A helical membrane pass occupies residues Phe338 to Leu358. Over Gly359–Pro379 the chain is Cytoplasmic. The helical transmembrane segment at Leu380–Ala400 threads the bilayer. Residues Cys401–Thr441 lie on the Extracellular side of the membrane. A helical membrane pass occupies residues Val442–Ile462. The Cytoplasmic segment spans residues His463–Asp536. The chain crosses the membrane as a helical span at residues Phe537–Leu557. Topologically, residues Leu558–Thr565 are extracellular. Residues Val566–Leu586 form a helical membrane-spanning segment. The Cytoplasmic segment spans residues Ser587–Ala656. A disordered region spans residues Ala635 to Ala656. Position 651 is a phosphoserine (Ser651).

This sequence belongs to the CTL (choline transporter-like) family. Expressed in neurons, oligodendrocytes and astrocytes. Also expressed in the mucosal cell layer of the colon. In the developing brain, isoform 1 is expressed in both neurons and oligodendroglial cells, whereas isoform 2 is restricted to oligodendroglial cells.

It is found in the cell membrane. It localises to the mitochondrion outer membrane. It carries out the reaction choline(out) + n H(+)(in) = choline(in) + n H(+)(out). It catalyses the reaction ethanolamine(out) + n H(+)(in) = ethanolamine(in) + n H(+)(out). Its function is as follows. Choline transporter, acts as a choline/H+ antiporter. Also acts as a high-affinity ethanolamine/H+ antiporter, regulating the supply of extracellular ethanolamine (Etn) for the CDP-Etn pathway, redistribute intracellular Etn and balance the CDP-Cho and CDP-Etn arms of the Kennedy pathway. Involved in membrane synthesis and myelin production. This Rattus norvegicus (Rat) protein is Choline transporter-like protein 1 (Slc44a1).